We begin with the raw amino-acid sequence, 118 residues long: Putative pterin-4-alpha-carbinolamine dehydratase (118 aa).

Belongs to the pterin-4-alpha-carbinolamine dehydratase family.

The catalysed reaction is (4aS,6R)-4a-hydroxy-L-erythro-5,6,7,8-tetrahydrobiopterin = (6R)-L-erythro-6,7-dihydrobiopterin + H2O. This Stutzerimonas stutzeri (strain A1501) (Pseudomonas stutzeri) protein is Putative pterin-4-alpha-carbinolamine dehydratase.